The primary structure comprises 1781 residues: BCL-6 corepressor-like protein 1 (1781 aa).

Disordered stretches follow at residues 64 to 136 and 337 to 362; these read AVGS…SHSR and ASTP…GPPS. Composition is skewed to polar residues over residues 66–82 and 127–136; these read GSGS…NTTE and PDSTEASHSR. Ser-490 is modified (phosphoserine). Over residues 521–531 the composition is skewed to low complexity; the sequence is SCTSPSSSTNS. 5 disordered regions span residues 521–545, 561–616, 733–777, 869–895, and 933–960; these read SCTS…LADT, LLPA…EMPL, NRDP…STVK, PLGS…PEQD, and QPSS…TPKM. Polar residues predominate over residues 581–594; it reads TDQQTEGTSVTFSP. Residues Ser-593 and Ser-607 each carry the phosphoserine modification. Residue Lys-741 forms a Glycyl lysine isopeptide (Lys-Gly) (interchain with G-Cter in SUMO2) linkage. Position 1024 is a phosphoserine (Ser-1024). Lys-1087 participates in a covalent cross-link: Glycyl lysine isopeptide (Lys-Gly) (interchain with G-Cter in SUMO2). A disordered region spans residues 1100–1484; the sequence is WQPDEETESL…PTARQIPPEA (385 aa). Residues 1116–1127 show a composition bias toward basic and acidic residues; sequence CNKEKEIEEEPR. Ser-1162 carries the phosphoserine modification. Over residues 1176–1185 the composition is skewed to basic residues; the sequence is VRGKHKHRKP. A compositionally biased stretch (basic and acidic residues) spans 1195–1213; the sequence is KRTDGHEEGSLEKKAKNSF. Polar residues predominate over residues 1222 to 1234; it reads STRTRSQSGSICS. Basic and acidic residues-rich tracts occupy residues 1271-1284 and 1297-1307; these read TQRD…HAQD and RAREMPWRTEA. The span at 1314-1324 shows a compositional bias: acidic residues; sequence TNEEEEDDEEE. Over residues 1328 to 1339 the composition is skewed to basic residues; it reads KRKKRRRQKSRK. Residues 1350 to 1362 show a composition bias toward basic and acidic residues; it reads EEQRRKGRADSKA. 2 stretches are compositionally biased toward polar residues: residues 1381–1394 and 1437–1449; these read LLLS…SDSP and RWSQ…SKSP. 3 ANK repeats span residues 1493 to 1523, 1527 to 1556, and 1560 to 1589; these read AGET…DVNH, AGYT…NVNC, and DGTR…DPTL. Positions 1664–1781 are PCGF Ub-like fold domain (PUFD); required for the interaction with the KDM2B-SKP1 heterodimeric complex; the sequence is DDFMFELSDK…SEVEYQSWSS (118 aa).

Belongs to the BCOR family. Interacts with PCGF1, forming heterodimers. The PCGF1-BCORL1 heterodimeric complex interacts with the KDM2B-SKP1 heterodimeric complex to form a homotetrameric polycomb repression complex 1 (PRC1.1). Interacts with SKP1. Interacts with CTBP1, HDAC4, HDAC5 and HDAC7. Highly expressed in lung and testis.

The protein localises to the nucleus. Its function is as follows. Transcriptional corepressor. May specifically inhibit gene expression when recruited to promoter regions by sequence specific DNA-binding proteins such as BCL6. This repression may be mediated at least in part by histone deacetylase activities which can associate with this corepressor. This is BCL-6 corepressor-like protein 1 (Bcorl1) from Mus musculus (Mouse).